Consider the following 156-residue polypeptide: Endogenous retrovirus group K member 113 Pro protein (156 aa).

One can recognise a Peptidase A2 domain in the interval 21 to 96 (FEGLVDTGAD…IPLNLWGRDL (76 aa)). Residue Asp-26 is part of the active site. Residues 111-156 (YSPTSQKIMTKMGYIPGKGLGKNEDGIKIPVEAKINQKREGIGYPF) form the G-patch domain.

This sequence belongs to the peptidase A2 family. HERV class-II K(HML-2) subfamily. In terms of assembly, active as a homodimer. Autoproteolytically processed at the N-terminus. Expected C-terminal autoprocessing not detected. The sequence shown is that of the processed Pro protein.

It carries out the reaction Processing at the authentic HIV-1 PR recognition site and release of the mature p17 matrix and the p24 capsid protein, as a result of the cleavage of the -SQNY-|-PIVQ- cleavage site.. Its function is as follows. Retroviral proteases have roles in the processing of the primary translation products and the maturation of the viral particle. Endogenous Pro proteins may have kept, lost or modified their original function during evolution. The polypeptide is Endogenous retrovirus group K member 113 Pro protein (HERVK_113) (Homo sapiens (Human)).